Reading from the N-terminus, the 122-residue chain is Large ribosomal subunit protein uL14c (122 aa).

It belongs to the universal ribosomal protein uL14 family. In terms of assembly, part of the 50S ribosomal subunit.

It localises to the plastid. It is found in the chloroplast. Its function is as follows. Binds to 23S rRNA. The protein is Large ribosomal subunit protein uL14c of Gracilaria tenuistipitata var. liui (Red alga).